Consider the following 275-residue polypeptide: tRNA pseudouridine synthase A (275 aa).

The active-site Nucleophile is the Asp56. Substrate is bound at residue Tyr110.

The protein belongs to the tRNA pseudouridine synthase TruA family.

The enzyme catalyses uridine(38/39/40) in tRNA = pseudouridine(38/39/40) in tRNA. Its function is as follows. Formation of pseudouridine at positions 38, 39 and 40 in the anticodon stem and loop of transfer RNAs. This is tRNA pseudouridine synthase A from Haloarcula marismortui (strain ATCC 43049 / DSM 3752 / JCM 8966 / VKM B-1809) (Halobacterium marismortui).